A 99-amino-acid chain; its full sequence is CLAVATA3/ESR (CLE)-related protein 41 (99 aa).

An N-terminal signal peptide occupies residues 1–34; the sequence is MATSNDQTNTKSSHSRTLLLLFIFLSLLLFSSLT. The interval 60 to 99 is disordered; sequence ASSTMDLRPKASTRRSRTSRRREFGNDAHEVPSGPNPISN. Basic residues predominate over residues 70 to 79; that stretch reads ASTRRSRTSR. A compositionally biased stretch (basic and acidic residues) spans 80 to 89; that stretch reads RREFGNDAHE. Residues P91 and P94 each carry the hydroxyproline modification. P94 carries an O-linked (Ara...) hydroxyproline glycan.

It belongs to the CLV3/ESR signal peptide family. CLE41p interacts specifically with the leucine-rich repeat receptor-like protein kinase TDR. Post-translationally, the O-glycosylation (arabinosylation) of the hydroxyproline Pro-94 enhances binding affinity of the CLE41p peptide for its receptor. Mostly expressed in inflorescence and roots, and, to a lower extent, in seedlings, flowers, leaves and siliques. Observed along the vascular strands in cotyledons, leaves and roots, but not in shoot apical meristems (SAM). Restricted to the phloem and the neighboring pericycle cells in the roots and hypocotyls.

It is found in the secreted. The protein resides in the extracellular space. Functionally, extracellular signal peptide that regulates cell fate. May act with TDR as a ligand-receptor pair in a signal transduction pathway that represses tracheary element differentiation but promotes the formation of procambial cells adjacent to phloem cells in the veins in an auxin-dependent manner. Regulates the transition of protophloem cells from proliferation to differentiation, thus impinging on postembryonic growth capacity of the root meristem; this signaling pathway requires CRN and CLV2. The protein is CLAVATA3/ESR (CLE)-related protein 41 of Arabidopsis thaliana (Mouse-ear cress).